Consider the following 417-residue polypeptide: Serine hydroxymethyltransferase (417 aa).

Residues leucine 121 and 125 to 127 (GHL) each bind (6S)-5,6,7,8-tetrahydrofolate. Lysine 230 bears the N6-(pyridoxal phosphate)lysine mark. 355 to 357 (SPF) is a (6S)-5,6,7,8-tetrahydrofolate binding site.

Belongs to the SHMT family. As to quaternary structure, homodimer. Pyridoxal 5'-phosphate serves as cofactor.

The protein resides in the cytoplasm. The enzyme catalyses (6R)-5,10-methylene-5,6,7,8-tetrahydrofolate + glycine + H2O = (6S)-5,6,7,8-tetrahydrofolate + L-serine. It functions in the pathway one-carbon metabolism; tetrahydrofolate interconversion. It participates in amino-acid biosynthesis; glycine biosynthesis; glycine from L-serine: step 1/1. Functionally, catalyzes the reversible interconversion of serine and glycine with tetrahydrofolate (THF) serving as the one-carbon carrier. This reaction serves as the major source of one-carbon groups required for the biosynthesis of purines, thymidylate, methionine, and other important biomolecules. Also exhibits THF-independent aldolase activity toward beta-hydroxyamino acids, producing glycine and aldehydes, via a retro-aldol mechanism. This Nitrosococcus oceani (strain ATCC 19707 / BCRC 17464 / JCM 30415 / NCIMB 11848 / C-107) protein is Serine hydroxymethyltransferase.